Consider the following 182-residue polypeptide: ATP synthase subunit delta, mitochondrial (182 aa).

Residues 1 to 17 (MFRTFGRRLVSCTLPLL) constitute a mitochondrion transit peptide.

The protein belongs to the ATPase epsilon chain family. As to quaternary structure, F-type ATPases have 2 components, F(1) - the catalytic core - and F(o) - the membrane proton channel. F(1) has five subunits: alpha(3), beta(3), gamma(1), delta(1), epsilon(1), plus the additional subunit P18 (Tb427.05.1710) that is not present in F(1)F(o) ATP synthase from metazoa. Subunit P18 (Tb927.5.1710) interacts with the alpha subunit with a 1:1 stoichiometry; the interaction is direct. Subunit gamma is part of the central stalk. F(o) has three main subunits: a, b and c. The trypanosomal ATPase complex contains additional subunits that are not present in the F(1)F(o) ATP synthase from metazoa.

The protein localises to the mitochondrion. It localises to the mitochondrion inner membrane. In terms of biological role, mitochondrial membrane ATP synthase (F(1)F(o) ATP synthase) produces ATP from ADP in the presence of a proton gradient across the membrane which is generated by electron transport complexes of the respiratory chain. F-type ATPases consist of two structural domains, F(1) - containing the extramembraneous catalytic core, and F(o) - containing the membrane proton channel, linked together by a central stalk and a peripheral stalk. During catalysis, ATP synthesis in the catalytic domain of F(1) is coupled via a rotary mechanism of the central stalk subunits to proton translocation. Subunits alpha and beta form the catalytic core in F(1). Rotation of the central stalk against the surrounding alpha(3)beta(3) subunits leads to hydrolysis of ATP in three separate catalytic sites on the beta subunits. Contrary to the procyclic, insect form that requires F(1)F(o) ATP synthase for ATP synthesis, the bloodstream form relies on ATP hydrolysis by F(1)F(o) ATP synthase to maintain its mitochondrial membrane potential. This is ATP synthase subunit delta, mitochondrial from Trypanosoma brucei brucei.